A 184-amino-acid chain; its full sequence is Elongation factor P 1 (184 aa).

The protein belongs to the elongation factor P family.

The protein localises to the cytoplasm. The protein operates within protein biosynthesis; polypeptide chain elongation. Involved in peptide bond synthesis. Stimulates efficient translation and peptide-bond synthesis on native or reconstituted 70S ribosomes in vitro. Probably functions indirectly by altering the affinity of the ribosome for aminoacyl-tRNA, thus increasing their reactivity as acceptors for peptidyl transferase. The polypeptide is Elongation factor P 1 (efp1) (Protochlamydia amoebophila (strain UWE25)).